The chain runs to 130 residues: Small ribosomal subunit protein uS11 (130 aa).

The protein belongs to the universal ribosomal protein uS11 family. Part of the 30S ribosomal subunit. Interacts with proteins S7 and S18. Binds to IF-3.

Located on the platform of the 30S subunit, it bridges several disparate RNA helices of the 16S rRNA. Forms part of the Shine-Dalgarno cleft in the 70S ribosome. The polypeptide is Small ribosomal subunit protein uS11 (Prochlorococcus marinus (strain AS9601)).